The primary structure comprises 184 residues: ATP synthase subunit b, chloroplastic (184 aa).

A helical transmembrane segment spans residues 27–49 (LATNLINLSVVIGVLIFFGKGVL).

The protein belongs to the ATPase B chain family. F-type ATPases have 2 components, F(1) - the catalytic core - and F(0) - the membrane proton channel. F(1) has five subunits: alpha(3), beta(3), gamma(1), delta(1), epsilon(1). F(0) has four main subunits: a(1), b(1), b'(1) and c(10-14). The alpha and beta chains form an alternating ring which encloses part of the gamma chain. F(1) is attached to F(0) by a central stalk formed by the gamma and epsilon chains, while a peripheral stalk is formed by the delta, b and b' chains.

Its subcellular location is the plastid. The protein localises to the chloroplast thylakoid membrane. F(1)F(0) ATP synthase produces ATP from ADP in the presence of a proton or sodium gradient. F-type ATPases consist of two structural domains, F(1) containing the extramembraneous catalytic core and F(0) containing the membrane proton channel, linked together by a central stalk and a peripheral stalk. During catalysis, ATP synthesis in the catalytic domain of F(1) is coupled via a rotary mechanism of the central stalk subunits to proton translocation. In terms of biological role, component of the F(0) channel, it forms part of the peripheral stalk, linking F(1) to F(0). This Jasminum nudiflorum (Winter jasmine) protein is ATP synthase subunit b, chloroplastic.